Consider the following 211-residue polypeptide: Large ribosomal subunit protein bL25 (211 aa).

Belongs to the bacterial ribosomal protein bL25 family. CTC subfamily. As to quaternary structure, part of the 50S ribosomal subunit; part of the 5S rRNA/L5/L18/L25 subcomplex. Contacts the 5S rRNA. Binds to the 5S rRNA independently of L5 and L18.

Functionally, this is one of the proteins that binds to the 5S RNA in the ribosome where it forms part of the central protuberance. In Methylobacterium nodulans (strain LMG 21967 / CNCM I-2342 / ORS 2060), this protein is Large ribosomal subunit protein bL25.